The following is a 73-amino-acid chain: MAPVDVESQVELDLKIEDFDYKNVALIKRFMTPVGRVLSRRATGLSAKKQRKMAKEVRKMKFLALVPYCDRHK.

This sequence belongs to the bacterial ribosomal protein bS18 family. In terms of assembly, part of the 30S ribosomal subunit. Forms a tight heterodimer with protein bS6.

Binds as a heterodimer with protein bS6 to the central domain of the 16S rRNA, where it helps stabilize the platform of the 30S subunit. The protein is Small ribosomal subunit protein bS18 of Neorickettsia sennetsu (strain ATCC VR-367 / Miyayama) (Ehrlichia sennetsu).